We begin with the raw amino-acid sequence, 139 residues long: Histone H2B (139 aa).

The segment covering Met-1–Pro-10 has biased composition (basic and acidic residues). A disordered region spans residues Met-1 to Lys-47. Residues Lys-8 and Lys-9 each carry the N6-acetyllysine; alternate modification. Residues Lys-8 and Lys-9 each participate in a glycyl lysine isopeptide (Lys-Gly) (interchain with G-Cter in SUMO); alternate cross-link. Residues Ser-11–Ala-22 are compositionally biased toward low complexity. Lys-15 carries the N6-acetyllysine modification. Lys-26 bears the N6-acetyllysine; alternate mark. Residue Lys-26 forms a Glycyl lysine isopeptide (Lys-Gly) (interchain with G-Cter in SUMO); alternate linkage. Residue Lys-27 forms a Glycyl lysine isopeptide (Lys-Gly) (interchain with G-Cter in SUMO) linkage. Lys-133 participates in a covalent cross-link: Glycyl lysine isopeptide (Lys-Gly) (interchain with G-Cter in ubiquitin).

It belongs to the histone H2B family. In terms of assembly, the nucleosome is a histone octamer containing two molecules each of H2A, H2B, H3 and H4 assembled in one H3-H4 heterotetramer and two H2A-H2B heterodimers. The octamer wraps approximately 147 bp of DNA. Monoubiquitinated by the UBC2-BRE1 complex to form H2BK123ub1. H2BK123ub1 gives a specific tag for epigenetic transcriptional activation and is also prerequisite for H3K4me and H3K79me formation. H2BK123ub1 also modulates the formation of double-strand breaks during meiosis and is a prerequisite for DNA-damage checkpoint activation. Post-translationally, acetylated by GCN5 to form H2BK11ac and H2BK16ac. H2BK16ac can also be formed by ESA1. Acetylation of N-terminal lysines and particularly formation of H2BK11acK16ac has a positive effect on transcription. In terms of processing, sumoylation to form H2BK6su or H2BK7su, and probably also H2BK16su or H2BK17su, occurs preferentially near the telomeres and represses gene transcription.

The protein resides in the nucleus. It localises to the chromosome. Core component of nucleosome. Nucleosomes wrap and compact DNA into chromatin, limiting DNA accessibility to the cellular machineries which require DNA as a template. Histones thereby play a central role in transcription regulation, DNA repair, DNA replication and chromosomal stability. DNA accessibility is regulated via a complex set of post-translational modifications of histones, also called histone code, and nucleosome remodeling. This is Histone H2B (HTB1) from Coccidioides immitis (strain RS) (Valley fever fungus).